The following is a 311-amino-acid chain: MSDLKHLTGLCNIPASNITSILDMAAGYKKKLITPCPSFEPSLQNKRIALVFFENSTRTRFSFEIAARHLGAGTLNFSASSSSVSKGESLSDTIKNLEAMQVDAFVLRHPSSGAADLITRITSKNVINAGDGSHEHPTQALLDMFTLREYFGTIDGLKVIIIGDVLHSRVARSNIYGLITAGAEVGICCPVTLMPPDADQLGITLFTDLDRAIAWADTAIVLRLQLERATGGYLPSLEEYSVHYGLTDERLERVQKHLLVLHPGPINREIEIANNVADRIQPPGYSKSMLLEQVTNGVAVRMAVLNTLLTL.

Residues Arg-58 and Thr-59 each contribute to the carbamoyl phosphate site. L-aspartate is bound at residue Lys-86. Positions 108, 136, and 139 each coordinate carbamoyl phosphate. The L-aspartate site is built by Arg-169 and Arg-223. The carbamoyl phosphate site is built by Gly-264 and Pro-265.

Belongs to the aspartate/ornithine carbamoyltransferase superfamily. ATCase family. Heterododecamer (2C3:3R2) of six catalytic PyrB chains organized as two trimers (C3), and six regulatory PyrI chains organized as three dimers (R2).

The enzyme catalyses carbamoyl phosphate + L-aspartate = N-carbamoyl-L-aspartate + phosphate + H(+). It participates in pyrimidine metabolism; UMP biosynthesis via de novo pathway; (S)-dihydroorotate from bicarbonate: step 2/3. Its function is as follows. Catalyzes the condensation of carbamoyl phosphate and aspartate to form carbamoyl aspartate and inorganic phosphate, the committed step in the de novo pyrimidine nucleotide biosynthesis pathway. This is Aspartate carbamoyltransferase catalytic subunit from Pelodictyon phaeoclathratiforme (strain DSM 5477 / BU-1).